Consider the following 469-residue polypeptide: ATP synthase subunit beta (469 aa).

Residue 156–163 (GGAGVGKT) participates in ATP binding.

This sequence belongs to the ATPase alpha/beta chains family. As to quaternary structure, F-type ATPases have 2 components, CF(1) - the catalytic core - and CF(0) - the membrane proton channel. CF(1) has five subunits: alpha(3), beta(3), gamma(1), delta(1), epsilon(1). CF(0) has three main subunits: a(1), b(2) and c(9-12). The alpha and beta chains form an alternating ring which encloses part of the gamma chain. CF(1) is attached to CF(0) by a central stalk formed by the gamma and epsilon chains, while a peripheral stalk is formed by the delta and b chains.

Its subcellular location is the cell membrane. It catalyses the reaction ATP + H2O + 4 H(+)(in) = ADP + phosphate + 5 H(+)(out). Produces ATP from ADP in the presence of a proton gradient across the membrane. The catalytic sites are hosted primarily by the beta subunits. This is ATP synthase subunit beta from Lactococcus lactis subsp. cremoris (strain MG1363).